Consider the following 819-residue polypeptide: Ferric-pyoverdine 358 receptor (819 aa).

An N-terminal signal peptide occupies residues 1-47 (MSKPLPSALNPLAKALLIRHSLRPRHALSRIGMGLALSSALVFQVQA). The TonB box signature appears at 115–122 (NTVTVTAS). One can recognise a TBDR plug domain in the interval 166–276 (SIRETPQTIT…PSAVVNVIRK (111 aa)). The 539-residue stretch at 281-819 (EFKSHIQAGV…NATVTLRYDF (539 aa)) folds into the TBDR beta-barrel domain. A TonB C-terminal box motif is present at residues 802–819 (YGHYGAPRNATVTLRYDF).

It belongs to the TonB-dependent receptor family.

It is found in the cell outer membrane. In terms of biological role, specific receptor for the siderophore ferric pyoverdine (pseudobactin) 358. The sequence is that of Ferric-pyoverdine 358 receptor (pupA) from Pseudomonas putida (Arthrobacter siderocapsulatus).